Reading from the N-terminus, the 1217-residue chain is Myosin-5 (1217 aa).

The segment covering 1–11 (MAILKRGARNK) has biased composition (basic residues). The interval 1–24 (MAILKRGARNKTHQEPAKRGGNNI) is disordered. A Myosin motor domain is found at 37-716 (VGVSDLTLLT…TLFALENMRD (680 aa)). Residue 130–137 (GESGAGKT) coordinates ATP. A Phosphoserine modification is found at serine 358. The actin-binding stretch occupies residues 405 to 487 (SIGILDIYGF…PGIFAAMNDS (83 aa)). IQ domains follow at residues 720–740 (HNMA…RIDA) and 741–766 (AVKI…YGTS). The TH1 domain occupies 772–962 (KERRSMSLLG…TIFVRRGNPA (191 aa)). 3 disordered regions span residues 956-1102 (VRRG…NPSE), 1145-1174 (GAKA…AQTV), and 1197-1217 (NKMR…DDDW). Over residues 965–974 (KSKKKPRKKS) the composition is skewed to basic residues. Polar residues predominate over residues 976 to 987 (GMSAPTTQSSKT). A compositionally biased stretch (low complexity) spans 994–1007 (SSNNQNTTVSQSLN). Residues 1025–1038 (PAPPPPGSKKPAPQ) are compositionally biased toward pro residues. Residues 1050-1071 (PQAQMQTQTQIPASQSSATQSS) are compositionally biased toward low complexity. Over residues 1072–1081 (IPPPPPPPPS) the composition is skewed to pro residues. An SH3 domain is found at 1083 to 1145 (TSEPQFEAAY…PTAYMVKHEG (63 aa)). Residues 1162–1174 (IQNQSQPASAQTV) show a composition bias toward polar residues. Over residues 1203 to 1217 (SDEEAAASSDNDDDW) the composition is skewed to acidic residues.

The protein belongs to the TRAFAC class myosin-kinesin ATPase superfamily. Myosin family. Post-translationally, phosphorylation of the TEDS site (Ser-358) is required for the polarization of the actin cytoskeleton. Phosphorylation probably activates the myosin-I ATPase activity.

It is found in the cytoplasm. Its subcellular location is the cytoskeleton. The protein resides in the actin patch. Its function is as follows. Type-I myosin implicated in the organization of the actin cytoskeleton. Required for proper actin cytoskeleton polarization. At the cell cortex, assembles in patch-like structures together with proteins from the actin-polymerizing machinery and promotes actin assembly. Functions as actin nucleation-promoting factor (NPF) for the Arp2/3 complex. The protein is Myosin-5 (MYO5) of Candida glabrata (strain ATCC 2001 / BCRC 20586 / JCM 3761 / NBRC 0622 / NRRL Y-65 / CBS 138) (Yeast).